The sequence spans 782 residues: Endonuclease MutS2 (782 aa).

Residue 336 to 343 coordinates ATP; that stretch reads GPNTGGKT. Positions 707 to 782 constitute a Smr domain; sequence LDLRGYRYEE…GFGVTVAELK (76 aa).

The protein belongs to the DNA mismatch repair MutS family. MutS2 subfamily. As to quaternary structure, homodimer. Binds to stalled ribosomes, contacting rRNA.

In terms of biological role, endonuclease that is involved in the suppression of homologous recombination and thus may have a key role in the control of bacterial genetic diversity. Functionally, acts as a ribosome collision sensor, splitting the ribosome into its 2 subunits. Detects stalled/collided 70S ribosomes which it binds and splits by an ATP-hydrolysis driven conformational change. Acts upstream of the ribosome quality control system (RQC), a ribosome-associated complex that mediates the extraction of incompletely synthesized nascent chains from stalled ribosomes and their subsequent degradation. Probably generates substrates for RQC. The chain is Endonuclease MutS2 from Staphylococcus epidermidis (strain ATCC 12228 / FDA PCI 1200).